The sequence spans 493 residues: MADSKPLRTLDGDPVAVEALLQDVFGIVVDEAILKGTSASEKVCEWKEPEELKQLLDLELQSQGESREQILERCRTVIHYSVKTGHPRFFNQLFSGLDPHALAGRIITESLNTSQYTYEIAPVFVLMEEEVLKKLRALVGWNSGDGVFCPGGSISNMYAMNLARFQRYPDCKQRGLRALPPLALFTSKECHYSITKGAAFLGLGTDSVRVVKADERGRMIPEDLERQIILAEAEGSVPFLVSATSGTTVLGAFDPLDAIADVCQRHGLWFHVDAAWGGSVLLSRTHRHLLDGIQRADSVAWNPHKLLAAGLQCSALLLRDTSNLLKRCHGSQASYLFQQDKFYDVALDTGDKVVQCGRRVDCLKLWLMWKAQGGQGLERRIDQAFALTRYLVEEIKKREGFELVMEPEFVNVCFWFVPPSLRGKKESPDYSQRLSQVAPVLKERMVKKGTMMIGYQPHGTRANFFRMVVANPILAQADIDFLLGELELLGQDL.

Lysine 305 is subject to N6-(pyridoxal phosphate)lysine.

This sequence belongs to the group II decarboxylase family. In terms of assembly, homodimer. Requires pyridoxal 5'-phosphate as cofactor. In terms of tissue distribution, expressed in kidney and liver not detected in lymphoid tissues and lung. Expressed in kidney, liver and brain. 7 and 4 times higher expression in kidney and liver than in brain, respectively. Low level of detection in skeletal muscle. Expressed in brain, olfactory bulb, liver, skeletal muscle and kidney with the highest expression in liver and lowest in skeletal muscle (at protein level).

It carries out the reaction L-aspartate + H(+) = beta-alanine + CO2. The enzyme catalyses 3-sulfino-L-alanine + H(+) = hypotaurine + CO2. It catalyses the reaction L-cysteate + H(+) = taurine + CO2. It participates in organosulfur biosynthesis; taurine biosynthesis; hypotaurine from L-cysteine: step 2/2. With respect to regulation, activated by Mn(2+). Inhibited by bis-carboxymethyl-trithiocarbonate, ethylxanthogenacetic acid and 2,5-disulfoaniline. Not affected by Li(+) within 0.05-40 mM concentration range. Catalyzes the decarboxylation of L-aspartate, 3-sulfino-L-alanine (cysteine sulfinic acid), and L-cysteate to beta-alanine, hypotaurine and taurine, respectively. The preferred substrate is 3-sulfino-L-alanine. Does not exhibit any decarboxylation activity toward glutamate. The protein is Cysteine sulfinic acid decarboxylase of Mus musculus (Mouse).